The primary structure comprises 199 residues: Probable GTP-binding protein EngB (199 aa).

Residues 28-199 (DLPEIALAGR…DSWDAILEQV (172 aa)) form the EngB-type G domain. GTP contacts are provided by residues 36–43 (GRSNVGKS), 63–67 (GKTQL), 81–84 (DVPG), 148–151 (TKAD), and 180–182 (FSS). Mg(2+) is bound by residues Ser-43 and Thr-65.

The protein belongs to the TRAFAC class TrmE-Era-EngA-EngB-Septin-like GTPase superfamily. EngB GTPase family. Mg(2+) is required as a cofactor.

Functionally, necessary for normal cell division and for the maintenance of normal septation. The polypeptide is Probable GTP-binding protein EngB (Streptococcus pyogenes serotype M6 (strain ATCC BAA-946 / MGAS10394)).